Here is a 305-residue protein sequence, read N- to C-terminus: Aspartate carbamoyltransferase catalytic subunit (305 aa).

Carbamoyl phosphate-binding residues include arginine 52 and threonine 53. Lysine 80 is an L-aspartate binding site. Carbamoyl phosphate-binding residues include arginine 102, histidine 132, and glutamine 135. Residues arginine 165 and arginine 217 each coordinate L-aspartate. Alanine 258 and proline 259 together coordinate carbamoyl phosphate.

This sequence belongs to the aspartate/ornithine carbamoyltransferase superfamily. ATCase family. Heterododecamer (2C3:3R2) of six catalytic PyrB chains organized as two trimers (C3), and six regulatory PyrI chains organized as three dimers (R2).

It carries out the reaction carbamoyl phosphate + L-aspartate = N-carbamoyl-L-aspartate + phosphate + H(+). It participates in pyrimidine metabolism; UMP biosynthesis via de novo pathway; (S)-dihydroorotate from bicarbonate: step 2/3. Its function is as follows. Catalyzes the condensation of carbamoyl phosphate and aspartate to form carbamoyl aspartate and inorganic phosphate, the committed step in the de novo pyrimidine nucleotide biosynthesis pathway. The sequence is that of Aspartate carbamoyltransferase catalytic subunit from Latilactobacillus sakei subsp. sakei (strain 23K) (Lactobacillus sakei subsp. sakei).